A 333-amino-acid chain; its full sequence is 4-hydroxyproline epimerase (333 aa).

The active-site Proton acceptor is the Cys-90. Residues 91-92 (GH) and Asp-249 contribute to the substrate site. Cys-253 acts as the Proton donor in catalysis. 254-255 (GT) is a binding site for substrate.

Belongs to the proline racemase family. Homodimer.

It carries out the reaction trans-4-hydroxy-L-proline = cis-4-hydroxy-D-proline. Its activity is regulated as follows. Inhibited by iodoacetate, iodoacetamide and by high amounts (10 mM) of pyrrole-2-carboxylic acid (PYC). Not inhibited by PYC at 1 mM. Allows intracellular utilization of 4-hydroxyproline, one of the major constituents of host collagen, by converting 4-hydroxy-L-proline to 4-hydroxy-D-proline, which can be further metabolized by intracellular 4-hydroxy-D-proline oxidases. Strong B-cell mitogen. Plays an important role in the regulation of intra- and extracellular amino acid pools, allowing the bacterium to profit from host precursors and enzymatic pathways. This Brucella melitensis biotype 1 (strain ATCC 23456 / CCUG 17765 / NCTC 10094 / 16M) protein is 4-hydroxyproline epimerase.